A 409-amino-acid chain; its full sequence is uncharacterized protein (409 aa).

The 270-residue stretch at 5–274 (ILIGFVGKPS…LAKQGFVKYE (270 aa)) folds into the OBG-type G domain. GTP contacts are provided by residues 11–18 (GKPSSGKS) and 83–87 (DVAGL).

This sequence belongs to the TRAFAC class OBG-HflX-like GTPase superfamily. OBG GTPase family.

The protein resides in the cytoplasm. Its subcellular location is the nucleus. This is an uncharacterized protein from Schizosaccharomyces pombe (strain 972 / ATCC 24843) (Fission yeast).